A 271-amino-acid chain; its full sequence is Phosphate import ATP-binding protein PstB 1 (271 aa).

Residues Leu25–Ile266 form the ABC transporter domain. Gly57–Ser64 serves as a coordination point for ATP.

It belongs to the ABC transporter superfamily. Phosphate importer (TC 3.A.1.7) family. The complex is composed of two ATP-binding proteins (PstB), two transmembrane proteins (PstC and PstA) and a solute-binding protein (PstS).

The protein resides in the cell inner membrane. The catalysed reaction is phosphate(out) + ATP + H2O = ADP + 2 phosphate(in) + H(+). Part of the ABC transporter complex PstSACB involved in phosphate import. Responsible for energy coupling to the transport system. This chain is Phosphate import ATP-binding protein PstB 1, found in Pectobacterium atrosepticum (strain SCRI 1043 / ATCC BAA-672) (Erwinia carotovora subsp. atroseptica).